A 318-amino-acid chain; its full sequence is Beta-ketoacyl-[acyl-carrier-protein] synthase III (318 aa).

Active-site residues include C113 and H245. The ACP-binding stretch occupies residues Q246 to R250. Residue N275 is part of the active site.

The protein belongs to the thiolase-like superfamily. FabH family. Homodimer.

The protein resides in the cytoplasm. The enzyme catalyses malonyl-[ACP] + acetyl-CoA + H(+) = 3-oxobutanoyl-[ACP] + CO2 + CoA. The protein operates within lipid metabolism; fatty acid biosynthesis. Its function is as follows. Catalyzes the condensation reaction of fatty acid synthesis by the addition to an acyl acceptor of two carbons from malonyl-ACP. Catalyzes the first condensation reaction which initiates fatty acid synthesis and may therefore play a role in governing the total rate of fatty acid production. Possesses both acetoacetyl-ACP synthase and acetyl transacylase activities. Its substrate specificity determines the biosynthesis of branched-chain and/or straight-chain of fatty acids. This chain is Beta-ketoacyl-[acyl-carrier-protein] synthase III, found in Wolbachia pipientis wMel.